The chain runs to 158 residues: Non-secretory ribonuclease (158 aa).

The N-terminal stretch at 1 to 27 (MVPKLFTSQICVLLLFGLLSVEVSLQV) is a signal peptide. C-linked (Man) tryptophan glycosylation is present at Trp34. The Proton acceptor role is filled by His42. 4 cysteine pairs are disulfide-bonded: Cys50–Cys110, Cys64–Cys121, Cys82–Cys136, and Cys89–Cys98. A 3'-nitrotyrosine modification is found at Tyr60. 65–69 (KNQNT) serves as a coordination point for substrate. N-linked (GlcNAc...) asparagine glycosylation is found at Asn86, Asn92, and Asn111. His153 (proton donor) is an active-site residue.

Belongs to the pancreatic ribonuclease family. In terms of assembly, interacts with and forms a tight 1:1 complex with RNH1. Dimerization of two such complexes may occur.

Its subcellular location is the lysosome. It is found in the cytoplasmic granule. The enzyme catalyses an [RNA] containing cytidine + H2O = an [RNA]-3'-cytidine-3'-phosphate + a 5'-hydroxy-ribonucleotide-3'-[RNA].. It carries out the reaction an [RNA] containing uridine + H2O = an [RNA]-3'-uridine-3'-phosphate + a 5'-hydroxy-ribonucleotide-3'-[RNA].. Its function is as follows. This is a non-secretory ribonuclease. It is a pyrimidine specific nuclease with a slight preference for U. Cytotoxin and helminthotoxin. Possesses a wide variety of biological activities. The protein is Non-secretory ribonuclease (RNASE2) of Saguinus oedipus (Cotton-top tamarin).